The sequence spans 531 residues: RCC1 and BTB domain-containing protein 1 (531 aa).

RCC1 repeat units follow at residues 40–91 (NDEV…LLST), 93–145 (DGVV…ALAA), 147–198 (GEVF…AVLD), 199–250 (NGEV…ALTD), 252–302 (GLLY…AAKT), and 304–356 (GGHV…FLTV). BTB domains lie at 370-437 (ADLK…DLPP) and 470-499 (ENAF…INHL).

As to expression, ubiquitously expressed. In the retina, present in the nerve fiber layer and to a lesser extent in the inner and outer plexiform layers (at protein level).

It localises to the nucleus. May be involved in cell cycle regulation by chromatin remodeling. This Homo sapiens (Human) protein is RCC1 and BTB domain-containing protein 1 (RCBTB1).